Here is a 312-residue protein sequence, read N- to C-terminus: MNWTELSIIINHEAVELATNILENHGSNGVVIEDSDDLINQPEDKYGEIYALKKEDYPDKGVRLKAYFNELTYDDKLRQRIKDELLNLDELDQHNVQFSEKIIAETDWENEWKNYFHPFRASKKFTIVPSWETYAKEADEELCIELDPGMAFGTGDHPTTSMCLKAIETYVLPQHSVIDVGTGSGILSIASHLIGVKRIKALDIDEMAVSVAKENFRRNHCETLIEAVPGNLLKDETEKFDIVIANILAHIIDEMIEDAYNTLNEGGYFITSGIIKEKYEGIQSHMERVGFKIISEQHDNGWVCLVGQKVSE.

S-adenosyl-L-methionine-binding residues include T160, G181, D203, and N246.

Belongs to the methyltransferase superfamily. PrmA family.

Its subcellular location is the cytoplasm. The enzyme catalyses L-lysyl-[protein] + 3 S-adenosyl-L-methionine = N(6),N(6),N(6)-trimethyl-L-lysyl-[protein] + 3 S-adenosyl-L-homocysteine + 3 H(+). In terms of biological role, methylates ribosomal protein L11. The chain is Ribosomal protein L11 methyltransferase from Staphylococcus aureus (strain bovine RF122 / ET3-1).